A 412-amino-acid chain; its full sequence is DNA replication and repair protein RecF (412 aa).

Residue 30–37 participates in ATP binding; sequence GKNGLGKT.

Belongs to the RecF family.

It localises to the cytoplasm. In terms of biological role, the RecF protein is involved in DNA metabolism; it is required for DNA replication and normal SOS inducibility. RecF binds preferentially to single-stranded, linear DNA. It also seems to bind ATP. This chain is DNA replication and repair protein RecF, found in Bifidobacterium longum subsp. infantis (strain ATCC 15697 / DSM 20088 / JCM 1222 / NCTC 11817 / S12).